The following is a 597-amino-acid chain: Indole-3-acetic acid-amido synthetase GH3.4 (597 aa).

Belongs to the IAA-amido conjugating enzyme family.

Its function is as follows. Catalyzes the synthesis of indole-3-acetic acid (IAA)-amino acid conjugates, providing a mechanism for the plant to cope with the presence of excess auxin. Strongly reactive with Glu, Gln, Trp, Asp, Ala, Leu, Phe, Gly, Tyr, Met, Ile and Val. Little or no product formation with His, Ser, Thr, Arg, Lys, or Cys. Also active on pyruvic and butyric acid analogs of IAA, PAA and the synthetic auxin naphthaleneacetic acid (NAA). The two chlorinated synthetic auxin herbicides 2,4-D and 3,6-dichloro-o-anisic acid (dicamba) cannot be used as substrates. The chain is Indole-3-acetic acid-amido synthetase GH3.4 (GH3.4) from Arabidopsis thaliana (Mouse-ear cress).